Reading from the N-terminus, the 419-residue chain is Cysteine desulfurase (419 aa).

Pyridoxal 5'-phosphate is bound by residues 69-70 (AT), Asn157, Gln185, and 205-207 (SAH). An N6-(pyridoxal phosphate)lysine modification is found at Lys208. Thr245 serves as a coordination point for pyridoxal 5'-phosphate. The active-site Cysteine persulfide intermediate is the Cys333. Cys333 provides a ligand contact to [2Fe-2S] cluster. A disordered region spans residues 392 to 419 (TPIQDEVRDDNRASSNSLNRGSAASKES). Residues 404 to 413 (ASSNSLNRGS) show a composition bias toward polar residues.

Belongs to the class-V pyridoxal-phosphate-dependent aminotransferase family. NifS/IscS subfamily. Homodimer. The cofactor is pyridoxal 5'-phosphate.

It catalyses the reaction (sulfur carrier)-H + L-cysteine = (sulfur carrier)-SH + L-alanine. Functionally, catalyzes the removal of elemental sulfur atoms from cysteine to produce alanine. Seems to participate in the biosynthesis of the nitrogenase metalloclusters by providing the inorganic sulfur required for the Fe-S core formation. This Frankia sp. (strain EuIK1) protein is Cysteine desulfurase.